The primary structure comprises 249 residues: DNA polymerase sliding clamp 1 (249 aa).

It belongs to the PCNA family. Homotrimer. The subunits circularize to form a toroid; DNA passes through its center. Replication factor C (RFC) is required to load the toroid on the DNA. Interacts with TIP.

With respect to regulation, inhibited by interaction with the PCNA inhibitor TIP. In terms of biological role, sliding clamp subunit that acts as a moving platform for DNA processing. Responsible for tethering the catalytic subunit of DNA polymerase and other proteins to DNA during high-speed replication. The polypeptide is DNA polymerase sliding clamp 1 (Thermococcus kodakarensis (strain ATCC BAA-918 / JCM 12380 / KOD1) (Pyrococcus kodakaraensis (strain KOD1))).